A 304-amino-acid polypeptide reads, in one-letter code: tRNA pseudouridine synthase B (304 aa).

The Nucleophile role is filled by D38.

It belongs to the pseudouridine synthase TruB family. Type 1 subfamily.

It carries out the reaction uridine(55) in tRNA = pseudouridine(55) in tRNA. Functionally, responsible for synthesis of pseudouridine from uracil-55 in the psi GC loop of transfer RNAs. The sequence is that of tRNA pseudouridine synthase B from Listeria monocytogenes serotype 4b (strain F2365).